The chain runs to 519 residues: Cytochrome P450 709B1 (519 aa).

The chain crosses the membrane as a helical span at residues 1 to 21; the sequence is MGLVIFLALIVLILIIGLRIF. Heme is bound at residue C464.

Belongs to the cytochrome P450 family. It depends on heme as a cofactor. Highly expressed in siliques.

It localises to the membrane. Its function is as follows. Involved in stress response. Does not function as cytokinin hydroxylase in yeast heterologous system. This chain is Cytochrome P450 709B1, found in Arabidopsis thaliana (Mouse-ear cress).